Consider the following 708-residue polypeptide: Elongation factor G (708 aa).

A tr-type G domain is found at 8–290; it reads KRYRNIGISA…AVIQYLPAPM (283 aa). GTP is bound by residues 17-24, 88-92, and 142-145; these read AHIDAGKT, DTPGH, and NKMD.

It belongs to the TRAFAC class translation factor GTPase superfamily. Classic translation factor GTPase family. EF-G/EF-2 subfamily.

The protein localises to the cytoplasm. Functionally, catalyzes the GTP-dependent ribosomal translocation step during translation elongation. During this step, the ribosome changes from the pre-translocational (PRE) to the post-translocational (POST) state as the newly formed A-site-bound peptidyl-tRNA and P-site-bound deacylated tRNA move to the P and E sites, respectively. Catalyzes the coordinated movement of the two tRNA molecules, the mRNA and conformational changes in the ribosome. The polypeptide is Elongation factor G (Psychrobacter cryohalolentis (strain ATCC BAA-1226 / DSM 17306 / VKM B-2378 / K5)).